The primary structure comprises 430 residues: CinA-like protein (430 aa).

This sequence belongs to the CinA family.

The polypeptide is CinA-like protein (Mycobacterium tuberculosis (strain ATCC 25177 / H37Ra)).